We begin with the raw amino-acid sequence, 211 residues long: Small ribosomal subunit protein eS1 (211 aa).

The disordered stretch occupies residues 192–211 (NGLPPYEAVGDRATPELASY).

Belongs to the eukaryotic ribosomal protein eS1 family.

This is Small ribosomal subunit protein eS1 from Methanopyrus kandleri (strain AV19 / DSM 6324 / JCM 9639 / NBRC 100938).